A 504-amino-acid chain; its full sequence is Sodium-coupled neutral amino acid symporter 2 (504 aa).

A disordered region spans residues 1–23 (MKKTEMGRFNISPDEDSSSYSSN). The Cytoplasmic segment spans residues 1–76 (MKKTEMGRFN…HPGTTSFGMS (76 aa)). Residues 1 to 96 (MKKTEMGRFN…SGILGLSYAM (96 aa)) form a regulates protein turnover upon amino acid deprivation region. Phosphoserine occurs at positions 12, 21, 22, and 55. A helical membrane pass occupies residues 77 to 96 (VFNLSNAIVGSGILGLSYAM). N82 provides a ligand contact to Na(+). Residues 97 to 102 (ANTGIA) are Extracellular-facing. A helical membrane pass occupies residues 103–123 (LFIILLTFVSIFSLYSVHLLL). The Cytoplasmic portion of the chain corresponds to 124–158 (KTANEGGSLLYEQLGHKAYGLAGKLAASGSITMQN). A helical transmembrane segment spans residues 159-177 (IGAMSSYLFIVKYELPLVI). The Extracellular segment spans residues 178–188 (KALMNIEDTNG). Residues 189–209 (LWYLNGDYLVLLVSLVLILPL) traverse the membrane as a helical segment. Residues 210–217 (SLLRNLGY) lie on the Cytoplasmic side of the membrane. A helical membrane pass occupies residues 218-238 (LGYTSGLSLLCMIFFLIVVIC). Topologically, residues 239–289 (KKFQIPCPVEAALVANETVNGTFTQAALALAFNSTADDACRPRYFIFNSQT) are extracellular. C245 and C278 form a disulfide bridge. 2 N-linked (GlcNAc...) asparagine glycosylation sites follow: N254 and N258. Residues 290–310 (VYAVPILTFSFVCHPAVLPIY) traverse the membrane as a helical segment. Over 311–326 (EELKSRSRRRMMNVSK) the chain is Cytoplasmic. The chain crosses the membrane as a helical span at residues 327–347 (ISFFAMFLMYLLAALFGYLTF). Residues 348-368 (YGHVESELLHTYSEIVGTDIL) are Extracellular-facing. Residues 369–389 (LLVVRLAVLVAVTLTVPVVIF) traverse the membrane as a helical segment. T383 is a binding site for Na(+). Over 390–410 (PIRSSVTHLLCPTKEFSWLRH) the chain is Cytoplasmic. The chain crosses the membrane as a helical span at residues 411–431 (SIITVTILSFTNLLVIFVPTI). The Extracellular segment spans residues 432–433 (RD). The helical transmembrane segment at 434–454 (IFGFIGASAAAMLIFILPSAF) threads the bilayer. Residues 455-469 (YIKLVKKEPMRSVQK) lie on the Cytoplasmic side of the membrane. A helical transmembrane segment spans residues 470 to 492 (IGALCFLLSGIVVMIGSMGLIVL). The Extracellular portion of the chain corresponds to 493–504 (DWVHDASAAGGH).

This sequence belongs to the amino acid/polyamine transporter 2 family. Polyubiquitination by NEDD4L regulates the degradation and the activity of SLC38A2. As to expression, expressed in cerebral and cerebellar astrocytes and neurons.

The protein resides in the cell membrane. It carries out the reaction L-alanine(in) + Na(+)(in) = L-alanine(out) + Na(+)(out). The catalysed reaction is glycine(in) + Na(+)(in) = glycine(out) + Na(+)(out). It catalyses the reaction L-serine(in) + Na(+)(in) = L-serine(out) + Na(+)(out). The enzyme catalyses L-proline(in) + Na(+)(in) = L-proline(out) + Na(+)(out). It carries out the reaction L-methionine(in) + Na(+)(in) = L-methionine(out) + Na(+)(out). The catalysed reaction is L-histidine(in) + Na(+)(in) = L-histidine(out) + Na(+)(out). It catalyses the reaction L-asparagine(in) + Na(+)(in) = L-asparagine(out) + Na(+)(out). The enzyme catalyses L-glutamine(in) + Na(+)(in) = L-glutamine(out) + Na(+)(out). It carries out the reaction L-threonine(in) + Na(+)(in) = L-threonine(out) + Na(+)(out). The catalysed reaction is L-leucine(in) + Na(+)(in) = L-leucine(out) + Na(+)(out). It catalyses the reaction L-phenylalanine(in) + Na(+)(in) = L-phenylalanine(out) + Na(+)(out). With respect to regulation, inhibited by N-methyl-D-glucamine. Inhibited by choline. Allosteric regulation of sodium ions binding by pH. Symporter that cotransports neutral amino acids and sodium ions from the extracellular to the intracellular side of the cell membrane. The transport is pH-sensitive, Li(+)-intolerant, electrogenic, driven by the Na(+) electrochemical gradient and cotransports of neutral amino acids and sodium ions with a stoichiometry of 1:1. May function in the transport of amino acids at the blood-brain barrier. May function in the transport of amino acids in the supply of maternal nutrients to the fetus through the placenta. Maintains a key metabolic glutamine/glutamate balance underpinning retrograde signaling by dendritic release of the neurotransmitter glutamate. Transports L-proline in differentiating osteoblasts for the efficient synthesis of proline-enriched proteins and provides proline essential for osteoblast differentiation and bone formation during bone development. The chain is Sodium-coupled neutral amino acid symporter 2 from Mus musculus (Mouse).